The following is a 380-amino-acid chain: Queuine tRNA-ribosyltransferase (380 aa).

Catalysis depends on D95, which acts as the Proton acceptor. Residues 95–99 (DSGGF), D149, Q192, and G219 contribute to the substrate site. Residues 250-256 (GVGSPDS) form an RNA binding region. D269 (nucleophile) is an active-site residue. Residues 274–278 (TRIGR) form an RNA binding; important for wobble base 34 recognition region. Residues C307, C309, C312, and H338 each coordinate Zn(2+).

This sequence belongs to the queuine tRNA-ribosyltransferase family. In terms of assembly, homodimer. Within each dimer, one monomer is responsible for RNA recognition and catalysis, while the other monomer binds to the replacement base PreQ1. The cofactor is Zn(2+).

It carries out the reaction 7-aminomethyl-7-carbaguanine + guanosine(34) in tRNA = 7-aminomethyl-7-carbaguanosine(34) in tRNA + guanine. It functions in the pathway tRNA modification; tRNA-queuosine biosynthesis. Its function is as follows. Catalyzes the base-exchange of a guanine (G) residue with the queuine precursor 7-aminomethyl-7-deazaguanine (PreQ1) at position 34 (anticodon wobble position) in tRNAs with GU(N) anticodons (tRNA-Asp, -Asn, -His and -Tyr). Catalysis occurs through a double-displacement mechanism. The nucleophile active site attacks the C1' of nucleotide 34 to detach the guanine base from the RNA, forming a covalent enzyme-RNA intermediate. The proton acceptor active site deprotonates the incoming PreQ1, allowing a nucleophilic attack on the C1' of the ribose to form the product. After dissociation, two additional enzymatic reactions on the tRNA convert PreQ1 to queuine (Q), resulting in the hypermodified nucleoside queuosine (7-(((4,5-cis-dihydroxy-2-cyclopenten-1-yl)amino)methyl)-7-deazaguanosine). The protein is Queuine tRNA-ribosyltransferase of Geobacillus thermodenitrificans (strain NG80-2).